Consider the following 620-residue polypeptide: Zinc metalloproteinase-disintegrin-like ACLD (620 aa).

A signal peptide spans 1–20 (MIQVLLVTLCLAVFPYQGSS). Residues 21 to 189 (IILESGNVND…KKASQLNLTP (169 aa)) constitute a propeptide that is removed on maturation. Residues 199-395 (KYVEFVVVLD…RRPKCILNEP (197 aa)) form the Peptidase M12B domain. Glu202 contributes to the Ca(2+) binding site. 2 N-linked (GlcNAc...) asparagine glycosylation sites follow: Asn259 and Asn265. Position 286 (Asp286) interacts with Ca(2+). 3 disulfide bridges follow: Cys310-Cys390, Cys350-Cys374, and Cys352-Cys357. His335 is a binding site for Zn(2+). Residue Glu336 is part of the active site. His339 and His345 together coordinate Zn(2+). Asn373 carries N-linked (GlcNAc...) asparagine glycosylation. Ca(2+) contacts are provided by Cys390 and Asn393. A glycan (N-linked (GlcNAc...) asparagine) is linked at Asn396. A Disintegrin domain is found at 403–489 (PPVCGNELLE…ECPTDRFQRN (87 aa)). 6 residues coordinate Ca(2+): Val405, Asn408, Leu410, Glu412, Glu415, and Asp418. Disulfide bonds link Cys406/Cys435, Cys417/Cys430, Cys419/Cys425, Cys429/Cys452, Cys443/Cys449, Cys448/Cys474, Cys461/Cys481, Cys468/Cys500, Cys493/Cys505, Cys512/Cys562, Cys527/Cys573, Cys540/Cys550, Cys557/Cys599, and Cys593/Cys604. The D/ECD-tripeptide motif lies at 467–469 (DCD). Asn502 and Asn536 each carry an N-linked (GlcNAc...) asparagine glycan.

It belongs to the venom metalloproteinase (M12B) family. P-III subfamily. P-IIIa sub-subfamily. Monomer. Requires Zn(2+) as cofactor. In terms of tissue distribution, expressed by the venom gland.

Its subcellular location is the secreted. Its activity is regulated as follows. Inhibited by EDTA and O-phenanthroline. Not inhibited by PMSF, benzamidine, irreversible serine-proteinase inhibitors and cysteine proteinase inhibitor E-64. In terms of biological role, is a potent activator of prothrombin (F2). Does not elicit any hemorrhagic response. Barely inhibits collagen-induced platelet aggregation. Binds neither collagen, nor the jararhagin-monoclonal antibody MAJar3. Hydrolyzes the Aalpha-chain of fibrin and fibrinogen, without affecting the Bbeta- and gamma-chains. Is capable of triggering endothelial pro-inflammatory and procoagulant cell responses, but fails to trigger apoptosis. Induces von Willebrand factor release, and the expression of both ICAM1 and E-selectin (SELE) (without increase in VCAM1) in endothelial cells (HUVEC). Is also able to up-regulate the synthesis of the coagulation factor TF (F3). Enhances nitric oxide (NO) generation, prostacyclin production and interleukin-8 release. The polypeptide is Zinc metalloproteinase-disintegrin-like ACLD (Agkistrodon contortrix laticinctus (Broad-banded copperhead)).